The sequence spans 197 residues: MSHFFAHLSRLKLINRWPLMRNVRTENVSEHSLQVAFVAHALAIIKNRKFNGNLNAERIALLAMYHDASEVITGDLPTPIKYHNPKIAHEYKKIEKVAQQKLIEMLPKELQHDFRCLLDEHYYSEEEKALVKQADALCAYLKCLEELSAGNNEFIQAKARLEKTLAIRQSPEMDYFMAVFVPSFSLSLDEISLDSLD.

Residues 16–17 (RW) and histidine 31 each bind substrate. The HD domain occupies 28–140 (VSEHSLQVAF…VKQADALCAY (113 aa)). Histidine 31, histidine 66, and aspartate 67 together coordinate a divalent metal cation. Residues aspartate 67, 75–78 (DLPT), and aspartate 135 contribute to the substrate site. Residue aspartate 135 coordinates a divalent metal cation.

It belongs to the 5DNU family. In terms of assembly, homodimer. The cofactor is a divalent metal cation.

The protein resides in the cytoplasm. The catalysed reaction is a 2'-deoxyribonucleoside 5'-phosphate + H2O = a 2'-deoxyribonucleoside + phosphate. Functionally, catalyzes the strictly specific dephosphorylation of 2'-deoxyribonucleoside 5'-monophosphates. This Yersinia pseudotuberculosis serotype O:1b (strain IP 31758) protein is 5'-deoxynucleotidase YpsIP31758_1449.